Reading from the N-terminus, the 358-residue chain is Starch-binding domain-containing protein 1 (358 aa).

Topologically, residues 1-6 (MGAVWS) are extracellular. The chain crosses the membrane as a helical span at residues 7–23 (ALLVGGGLAGALFVWLL). At 24–358 (RGGPGDTGKD…KVVHAWWGIH (335 aa)) the chain is on the cytoplasmic side. The segment covering 30–42 (TGKDGDAEQEKDA) has biased composition (basic and acidic residues). Disordered regions lie at residues 30-70 (TGKD…QELV) and 104-151 (SREV…SPMG). A compositionally biased stretch (low complexity) spans 50–66 (PGGHQSGSSGLSPGPSG). A Phosphoserine modification is found at Ser-65. Basic and acidic residues predominate over residues 106–115 (EVCDNSREHV). Ser-117 is subject to Phosphoserine. Polar residues predominate over residues 126 to 140 (PATSETSNSRSYSEV). A phosphoserine mark is found at Ser-148, Ser-175, Ser-188, and Ser-194. The LIR motif lies at 200–206 (HEEWEMV). Ser-210, Ser-211, and Ser-220 each carry phosphoserine. The region spanning 258-357 (PAGSQQVSVR…DKVVHAWWGI (100 aa)) is the CBM20 domain.

In terms of assembly, interacts with the ATG8 family proteins GABARAP and GABARAPL1. Interacts with several glycogen-associated proteins, such as GYS2 (liver glycogen synthase), GDE (glycogen debranching enzyme), GBE1 (glycogen branching enzyme 1) and EPM2A (Laforin). Ubiquitinated, which leads to proteasomal degradation. Expressed at high level in skeletal and cardiac muscles. Moderately expressed in liver and placenta. No expression is found in pancreas, kidney or lung. Present in skeletal muscle, heart and placenta (at protein level).

The protein localises to the preautophagosomal structure membrane. The protein resides in the endoplasmic reticulum membrane. Its subcellular location is the cell membrane. It localises to the sarcolemma. It is found in the T-tubule. In terms of biological role, acts as a cargo receptor for glycogen. Delivers its cargo to an autophagic pathway called glycophagy, resulting in the transport of glycogen to lysosomes. This chain is Starch-binding domain-containing protein 1, found in Homo sapiens (Human).